The primary structure comprises 184 residues: Bcl-2-modifying factor (184 aa).

Residues Asp-67–Pro-75 are interaction with DLC2. A BH3 motif is present at residues Ile-133–Leu-147.

The protein belongs to the Bcl-2 family. Interacts with MCL1, BCL2, BCL2L1/BCL-Xl, BCL2A1 and BCL2L2/BCL-w. Interacts with the myosin V actin motor complex through its binding to DLC2. As to expression, isoform 1 is mainly expressed in B-lymphoid cells. Isoform 2 and isoform 3 are mainly expressed in B-CLL and normal B-cells.

In terms of biological role, may play a role in apoptosis. Isoform 1 seems to be the main initiator. The chain is Bcl-2-modifying factor (BMF) from Homo sapiens (Human).